Consider the following 447-residue polypeptide: Acyl-CoA (8-3)-desaturase (447 aa).

An N-acetylmethionine modification is found at Met-1. At Met-1–Arg-124 the chain is on the cytoplasmic side. Positions Thr-19–Ala-97 constitute a Cytochrome b5 heme-binding domain. A helical transmembrane segment spans residues Met-125–Leu-145. The Lumenal segment spans residues Asp-146–Leu-160. A helical transmembrane segment spans residues Val-161 to Leu-180. At Gln-181 to Tyr-268 the chain is on the cytoplasmic side. The Histidine box-1 motif lies at His-182–His-186. The Histidine box-2 motif lies at His-219–His-223. The helical transmembrane segment at Phe-269–Phe-289 threads the bilayer. Residues Val-290 to Arg-308 are Lumenal-facing. A helical transmembrane segment spans residues Ile-309–Val-329. Residues Arg-330 to Gln-447 are Cytoplasmic-facing. The Histidine box-3 signature appears at Gln-385–His-389.

Belongs to the fatty acid desaturase type 1 family. In terms of tissue distribution, highly expressed in the adrenal gland, liver, brain, and testis, tissues where lipogenesis and steroidogenesis are active. Expressed in colonic mucosa.

It localises to the endoplasmic reticulum membrane. Its subcellular location is the mitochondrion. The enzyme catalyses (8Z,11Z,14Z)-eicosatrienoyl-CoA + 2 Fe(II)-[cytochrome b5] + O2 + 2 H(+) = (5Z,8Z,11Z,14Z)-eicosatetraenoyl-CoA + 2 Fe(III)-[cytochrome b5] + 2 H2O. It carries out the reaction (8Z,11Z,14Z,17Z)-eicosatetraenoyl-CoA + 2 Fe(II)-[cytochrome b5] + O2 + 2 H(+) = (5Z,8Z,11Z,14Z,17Z)-eicosapentaenoyl-CoA + 2 Fe(III)-[cytochrome b5] + 2 H2O. It catalyses the reaction (11E)-octadecenoyl-CoA + 2 Fe(II)-[cytochrome b5] + O2 + 2 H(+) = (5Z,11E)-octadecadienoyl-CoA + 2 Fe(III)-[cytochrome b5] + 2 H2O. It participates in lipid metabolism; polyunsaturated fatty acid biosynthesis. Functionally, acts as a front-end fatty acyl-coenzyme A (CoA) desaturase that introduces a cis double bond at carbon 5 located between a preexisting double bond and the carboxyl end of the fatty acyl chain. Involved in biosynthesis of highly unsaturated fatty acids (HUFA) from the essential polyunsaturated fatty acids (PUFA) linoleic acid (LA) (18:2n-6) and alpha-linolenic acid (ALA) (18:3n-3) precursors. Specifically, desaturates dihomo-gamma-linoleoate (DGLA) (20:3n-6) and eicosatetraenoate (ETA) (20:4n-3) to generate arachidonate (AA) (20:4n-6) and eicosapentaenoate (EPA) (20:5n-3), respectively. As a rate limiting enzyme for DGLA (20:3n-6) and AA (20:4n-6)-derived eicosanoid biosynthesis, controls the metabolism of inflammatory lipids like prostaglandin E2, critical for efficient acute inflammatory response and maintenance of epithelium homeostasis. Contributes to membrane phospholipid biosynthesis by providing AA (20:4n-6) as a major acyl chain esterified into phospholipids. In particular, regulates phosphatidylinositol-4,5-bisphosphate levels, modulating inflammatory cytokine production in T-cells. Also desaturates (11E)-octadecenoate (trans-vaccenoate)(18:1n-9), a metabolite in the biohydrogenation pathway of LA (18:2n-6). The sequence is that of Acyl-CoA (8-3)-desaturase from Mus musculus (Mouse).